A 163-amino-acid polypeptide reads, in one-letter code: Ribonuclease P protein subunit p25-like protein (163 aa).

Disordered regions lie at residues 1-22 (MEHY…PQLP) and 129-163 (NECG…DTRS). Low complexity predominate over residues 143 to 152 (GSMPSSSCGP). The segment covering 153-163 (RSRRRARDTRS) has biased composition (basic residues).

Belongs to the histone-like Alba family.

It is found in the nucleus. Its function is as follows. May be a component of ribonuclease P or MRP. This Homo sapiens (Human) protein is Ribonuclease P protein subunit p25-like protein (RPP25L).